Here is a 219-residue protein sequence, read N- to C-terminus: MVFWIAGAVGLAIAYLLGSTPSGYLAGKLIRGIDIREHGSKSTGATNVLRTLGKWPALVVLLVDVLKGVGAVVFARWFYSWFSTLSSGMPPTALDLQSLEPWAVCLTGLAVLLGHGRSVWLNFTGGKSVAAGLGVLLAMSWPVGLGAAMVFGVALAISRIVSLSSMLAALTAIALVCGLEQPLPYRLLVIAGGIYVIARHRTNIRRLLAGTEPRLGKVA.

Helical transmembrane passes span 1–21 (MVFW…GSTP), 55–75 (WPAL…VVFA), 93–113 (ALDL…AVLL), 135–155 (VLLA…GVAL), and 160–180 (IVSL…CGLE).

The protein belongs to the PlsY family. In terms of assembly, probably interacts with PlsX.

It localises to the cell inner membrane. It carries out the reaction an acyl phosphate + sn-glycerol 3-phosphate = a 1-acyl-sn-glycero-3-phosphate + phosphate. It functions in the pathway lipid metabolism; phospholipid metabolism. Its function is as follows. Catalyzes the transfer of an acyl group from acyl-phosphate (acyl-PO(4)) to glycerol-3-phosphate (G3P) to form lysophosphatidic acid (LPA). This enzyme utilizes acyl-phosphate as fatty acyl donor, but not acyl-CoA or acyl-ACP. This is Glycerol-3-phosphate acyltransferase 2 from Rhizobium johnstonii (strain DSM 114642 / LMG 32736 / 3841) (Rhizobium leguminosarum bv. viciae).